The sequence spans 238 residues: tRNA (guanine-N(7)-)-methyltransferase (238 aa).

S-adenosyl-L-methionine-binding residues include Glu-68, Glu-93, Asp-120, and Asp-143. Asp-143 is a catalytic residue. Substrate contacts are provided by residues Lys-147, Asp-179, and 216–219 (TKFE).

Belongs to the class I-like SAM-binding methyltransferase superfamily. TrmB family.

The catalysed reaction is guanosine(46) in tRNA + S-adenosyl-L-methionine = N(7)-methylguanosine(46) in tRNA + S-adenosyl-L-homocysteine. The protein operates within tRNA modification; N(7)-methylguanine-tRNA biosynthesis. Functionally, catalyzes the formation of N(7)-methylguanine at position 46 (m7G46) in tRNA. This Aliivibrio fischeri (strain MJ11) (Vibrio fischeri) protein is tRNA (guanine-N(7)-)-methyltransferase.